The primary structure comprises 210 residues: Thiamine-phosphate synthase (210 aa).

4-amino-2-methyl-5-(diphosphooxymethyl)pyrimidine-binding positions include 34–38 (QLRHK) and asparagine 66. Mg(2+) contacts are provided by aspartate 67 and aspartate 86. Serine 105 is a binding site for 4-amino-2-methyl-5-(diphosphooxymethyl)pyrimidine. 131–133 (TSS) is a binding site for 2-[(2R,5Z)-2-carboxy-4-methylthiazol-5(2H)-ylidene]ethyl phosphate. Residue lysine 134 participates in 4-amino-2-methyl-5-(diphosphooxymethyl)pyrimidine binding. Glycine 162 lines the 2-[(2R,5Z)-2-carboxy-4-methylthiazol-5(2H)-ylidene]ethyl phosphate pocket.

It belongs to the thiamine-phosphate synthase family. It depends on Mg(2+) as a cofactor.

The enzyme catalyses 2-[(2R,5Z)-2-carboxy-4-methylthiazol-5(2H)-ylidene]ethyl phosphate + 4-amino-2-methyl-5-(diphosphooxymethyl)pyrimidine + 2 H(+) = thiamine phosphate + CO2 + diphosphate. The catalysed reaction is 2-(2-carboxy-4-methylthiazol-5-yl)ethyl phosphate + 4-amino-2-methyl-5-(diphosphooxymethyl)pyrimidine + 2 H(+) = thiamine phosphate + CO2 + diphosphate. It carries out the reaction 4-methyl-5-(2-phosphooxyethyl)-thiazole + 4-amino-2-methyl-5-(diphosphooxymethyl)pyrimidine + H(+) = thiamine phosphate + diphosphate. It participates in cofactor biosynthesis; thiamine diphosphate biosynthesis; thiamine phosphate from 4-amino-2-methyl-5-diphosphomethylpyrimidine and 4-methyl-5-(2-phosphoethyl)-thiazole: step 1/1. Functionally, condenses 4-methyl-5-(beta-hydroxyethyl)thiazole monophosphate (THZ-P) and 2-methyl-4-amino-5-hydroxymethyl pyrimidine pyrophosphate (HMP-PP) to form thiamine monophosphate (TMP). In Chlorobium limicola (strain DSM 245 / NBRC 103803 / 6330), this protein is Thiamine-phosphate synthase.